We begin with the raw amino-acid sequence, 103 residues long: Histone H4.2 (103 aa).

Residues 1–14 show a composition bias toward gly residues; that stretch reads MTGRGKGGKGLGKG. Positions 1–20 are disordered; that stretch reads MTGRGKGGKGLGKGGAKRHR. Lysine 6 is subject to N6-acetyl-N6-methyllysine; alternate. N6-methyllysine; alternate occurs at positions 6, 9, and 13. Lysine 13 carries the post-translational modification N6-acetyl-N6-methyllysine; alternate. Residues 17–21 mediate DNA binding; the sequence is KRHRK. Residue lysine 92 is modified to N6-glutaryllysine.

It belongs to the histone H4 family. The nucleosome is a histone octamer containing two molecules each of H2A, H2B, H3 and H4 assembled in one H3-H4 heterotetramer and two H2A-H2B heterodimers. The octamer wraps approximately 147 bp of DNA. In terms of processing, glutarylation at Lys-92 (H4K91glu) destabilizes nucleosomes by promoting dissociation of the H2A-H2B dimers from nucleosomes.

Its subcellular location is the nucleus. The protein resides in the chromosome. Its function is as follows. Core component of nucleosome. Nucleosomes wrap and compact DNA into chromatin, limiting DNA accessibility to the cellular machineries which require DNA as a template. Histones thereby play a central role in transcription regulation, DNA repair, DNA replication and chromosomal stability. DNA accessibility is regulated via a complex set of post-translational modifications of histones, also called histone code, and nucleosome remodeling. The polypeptide is Histone H4.2 (H4.2) (Talaromyces funiculosus (Fruitlet core rot fungus)).